Consider the following 421-residue polypeptide: DVFFYQADDQHFIPRSLLIDLEPRVINGIQNSEYRNLYNHENIFVAEHGGGAGNNWASGYHQGEQFVDDIMDMVDREADGSDSLEGFVLCHSIAGGTGSGMGSYLLETLNDRYSKKLVQTYSVFPNQVETSDVVVQPYNSLLTLKRLTLNADCVVVLDNTALNRIAVERLHLSNPTFAQTNSLVSTVMSASTTTLRYPGYMNNDLVGLLASLIPTPRCHFLMTGYTPLTVERQVNMIRKTTVLDVMRRLLQTKNIMVSSYARTKEASQAKYISILNIIQGEVDPTQVHESLQRIRERKLVNFIDWAPASIQVALSRKSPYVQTTHRVSGLMLANHTSIRHLFSKCLGQYEKLRKKQAFLDNYRKFPMFADNDLSEFDESREIIESLVDEYKACESPDYIKWGMEDPGEANVVAALDSKLVV.

GTP is bound at residue alanine 94–glycine 100.

The protein belongs to the tubulin family.

Its subcellular location is the cytoplasm. The protein resides in the cytoskeleton. The protein localises to the microtubule organizing center. Its function is as follows. Tubulin is the major constituent of microtubules. The gamma chain is found at microtubule organizing centers (MTOC) such as the spindle poles, suggesting that it is involved in the minus-end nucleation of microtubule assembly. This chain is Tubulin gamma-3 chain (TUBG3), found in Zea mays (Maize).